The primary structure comprises 294 residues: Taste receptor type 2 member 143 (294 aa).

The Extracellular segment spans residues 1–7 (MPSTPTL). Residues 8–28 (IFIVIFFLVSVASMLQNGFMI) form a helical membrane-spanning segment. Topologically, residues 29 to 43 (IVLGREWMRNRALPA) are cytoplasmic. Residues 44–64 (VDMIVASLASSRFCLHGIAIL) traverse the membrane as a helical segment. Topologically, residues 65–80 (NNFLASFDFCYQANFV) are extracellular. The chain crosses the membrane as a helical span at residues 81-101 (GILWDFINTLILWLTAWLAIF). Topologically, residues 102–128 (YCVKISSFSHPVLFWLKWRISQLVPRL) are cytoplasmic. The helical transmembrane segment at 129 to 149 (LLVSLIMGGLSAIISATGNII) threads the bilayer. Over 150 to 180 (ANQMIISQGFHGNCTFGHMSLDFYRYYYLSH) the chain is Extracellular. The N-linked (GlcNAc...) asparagine glycan is linked to asparagine 162. The helical transmembrane segment at 181–201 (AVLMWFTPFFLFLVSIIFLMF) threads the bilayer. At 202–227 (SLYRHVEKMRGHRPGPWDPRTQAHTM) the chain is on the cytoplasmic side. A helical membrane pass occupies residues 228 to 248 (ALKSLTVFITFYILFFLALII). Residues 249–260 (SSTKSKTMHSYW) are Extracellular-facing. A helical membrane pass occupies residues 261 to 281 (YWVREIIIYTGIFLNSIILVL). At 282 to 294 (SNPKLRKALKMRF) the chain is on the cytoplasmic side.

This sequence belongs to the G-protein coupled receptor T2R family.

It is found in the membrane. Its function is as follows. Putative taste receptor which may play a role in the perception of bitterness. The chain is Taste receptor type 2 member 143 from Rattus norvegicus (Rat).